Consider the following 212-residue polypeptide: Transcription antitermination protein NusB (212 aa).

2 disordered regions span residues 1 to 34 (MSDE…SKSN) and 169 to 212 (EHDR…QAAG). Residues 178 to 212 (APAQPAAKADTATDAVADAATDAAAADDAADQAAG) are compositionally biased toward low complexity.

This sequence belongs to the NusB family.

In terms of biological role, involved in transcription antitermination. Required for transcription of ribosomal RNA (rRNA) genes. Binds specifically to the boxA antiterminator sequence of the ribosomal RNA (rrn) operons. The sequence is that of Transcription antitermination protein NusB from Delftia acidovorans (strain DSM 14801 / SPH-1).